Reading from the N-terminus, the 935-residue chain is Protein translocase subunit SecA (935 aa).

ATP-binding positions include Gln90, 108–112, and Asp504; that span reads GEGKT.

The protein belongs to the SecA family. As to quaternary structure, monomer and homodimer. Part of the essential Sec protein translocation apparatus which comprises SecA, SecYEG and auxiliary proteins SecDF. Other proteins may also be involved.

The protein localises to the cell inner membrane. The protein resides in the cellular thylakoid membrane. It localises to the cytoplasm. It carries out the reaction ATP + H2O + cellular proteinSide 1 = ADP + phosphate + cellular proteinSide 2.. Its function is as follows. Part of the Sec protein translocase complex. Interacts with the SecYEG preprotein conducting channel. Has a central role in coupling the hydrolysis of ATP to the transfer of proteins into and across the cell membrane, serving as an ATP-driven molecular motor driving the stepwise translocation of polypeptide chains across the membrane. In terms of biological role, probably participates in protein translocation into and across both the cytoplasmic and thylakoid membranes in cyanobacterial cells. The protein is Protein translocase subunit SecA of Gloeothece citriformis (strain PCC 7424) (Cyanothece sp. (strain PCC 7424)).